Reading from the N-terminus, the 362-residue chain is Protein BIG GRAIN 1-like D (362 aa).

Disordered stretches follow at residues 22–113, 132–168, and 303–327; these read IDPK…TLFH, KFNR…GGRI, and VKTN…ASDS. Positions 23–47 are enriched in polar residues; it reads DPKTQKTQPYVGSVNTTTKKQSIVT. The segment covering 50–60 has biased composition (basic and acidic residues); the sequence is VPDRKIHRDRF. The segment covering 63–78 has biased composition (low complexity); the sequence is SVSSSSDSNSSIFSSS. The segment covering 132 to 144 has biased composition (basic and acidic residues); sequence KFNRHDENWENTR. The span at 309 to 324 shows a compositional bias: acidic residues; sequence EDYEDDDEDDDDDDVA.

The protein belongs to the BIG GRAIN 1 (BG1) plant protein family.

The protein resides in the cell membrane. Involved in auxin transport. Regulator of the auxin signaling pathway. The sequence is that of Protein BIG GRAIN 1-like D from Arabidopsis thaliana (Mouse-ear cress).